The sequence spans 114 residues: NLP effector protein 1 (114 aa).

This sequence belongs to the Necrosis inducing protein (NPP1) family.

It localises to the secreted. The protein localises to the host cytoplasm. Functionally, probable secreted effector that may act as a pathogen-associated molecular pattern (PAMP) recognized by the plant immune system. Seems not to induce necrosis, neither in several susceptible or resistant Vitis species nor in the dicot model plant Nicotiana benthamiana. This is NLP effector protein 1 from Plasmopara viticola (Downy mildew of grapevine).